The sequence spans 647 residues: tRNA 5-methylaminomethyl-2-thiouridine biosynthesis bifunctional protein MnmC (647 aa).

The tRNA (mnm(5)s(2)U34)-methyltransferase stretch occupies residues 1-227; sequence MLTWKNNLTP…KREMLIGSYS (227 aa). The tract at residues 256–647 is FAD-dependent cmnm(5)s(2)U34 oxidoreductase; it reads VGAGIAGTTL…ARFLYRKVRK (392 aa).

In the N-terminal section; belongs to the methyltransferase superfamily. tRNA (mnm(5)s(2)U34)-methyltransferase family. This sequence in the C-terminal section; belongs to the DAO family. The cofactor is FAD.

The protein localises to the cytoplasm. It carries out the reaction 5-aminomethyl-2-thiouridine(34) in tRNA + S-adenosyl-L-methionine = 5-methylaminomethyl-2-thiouridine(34) in tRNA + S-adenosyl-L-homocysteine + H(+). Functionally, catalyzes the last two steps in the biosynthesis of 5-methylaminomethyl-2-thiouridine (mnm(5)s(2)U) at the wobble position (U34) in tRNA. Catalyzes the FAD-dependent demodification of cmnm(5)s(2)U34 to nm(5)s(2)U34, followed by the transfer of a methyl group from S-adenosyl-L-methionine to nm(5)s(2)U34, to form mnm(5)s(2)U34. This chain is tRNA 5-methylaminomethyl-2-thiouridine biosynthesis bifunctional protein MnmC, found in Leptospira interrogans serogroup Icterohaemorrhagiae serovar Lai (strain 56601).